A 278-amino-acid polypeptide reads, in one-letter code: Large ribosomal subunit protein uL2 (278 aa).

Basic residues-rich tracts occupy residues 210–219 and 252–263; these read RSRWLGKRPQ and KKSRGIKTRNSK. Positions 210–278 are disordered; it reads RSRWLGKRPQ…LIIRHRKGNK (69 aa).

This sequence belongs to the universal ribosomal protein uL2 family. As to quaternary structure, part of the 50S ribosomal subunit. Forms a bridge to the 30S subunit in the 70S ribosome.

One of the primary rRNA binding proteins. Required for association of the 30S and 50S subunits to form the 70S ribosome, for tRNA binding and peptide bond formation. It has been suggested to have peptidyltransferase activity; this is somewhat controversial. Makes several contacts with the 16S rRNA in the 70S ribosome. The chain is Large ribosomal subunit protein uL2 from Lactobacillus johnsonii (strain CNCM I-12250 / La1 / NCC 533).